The chain runs to 404 residues: Propionate kinase (404 aa).

It belongs to the acetokinase family. PduW subfamily.

The protein localises to the cytoplasm. It carries out the reaction propanoate + ATP = propanoyl phosphate + ADP. It functions in the pathway polyol metabolism; 1,2-propanediol degradation. Its function is as follows. Works with phosphate acetyltransferase (pta) to capture exogenous propionate and regenerate propionyl-CoA during degradation of 1,2-propanediol (1,2-PD). The sequence is that of Propionate kinase from Klebsiella pneumoniae subsp. pneumoniae (strain ATCC 700721 / MGH 78578).